Reading from the N-terminus, the 98-residue chain is NADH-ubiquinone oxidoreductase chain 4L (98 aa).

A run of 3 helical transmembrane segments spans residues Met1–Met21, Ser29–Leu49, and Ile61–Val81.

Belongs to the complex I subunit 4L family. In terms of assembly, core subunit of respiratory chain NADH dehydrogenase (Complex I) which is composed of 45 different subunits.

Its subcellular location is the mitochondrion inner membrane. The enzyme catalyses a ubiquinone + NADH + 5 H(+)(in) = a ubiquinol + NAD(+) + 4 H(+)(out). In terms of biological role, core subunit of the mitochondrial membrane respiratory chain NADH dehydrogenase (Complex I) which catalyzes electron transfer from NADH through the respiratory chain, using ubiquinone as an electron acceptor. Part of the enzyme membrane arm which is embedded in the lipid bilayer and involved in proton translocation. This is NADH-ubiquinone oxidoreductase chain 4L (MT-ND4L) from Ommatophoca rossii (Ross seal).